The following is a 526-amino-acid chain: Na(+)/H(+) antiporter NhaB (526 aa).

The next 11 helical transmembrane spans lie at 14 to 34 (FLGY…LVNP), 63 to 83 (CYPL…GMTS), 99 to 119 (MLLV…LFVF), 122 to 142 (LLLR…AAAF), 146 to 166 (FLDA…FYGI), 206 to 226 (LLMH…VGEP), 239 to 259 (FVSF…CGIL), 307 to 327 (AVIG…VGLI), 357 to 377 (FTAL…QQLF), 451 to 471 (ATPN…APLI), and 479 to 499 (VIMA…CVEF).

It belongs to the NhaB Na(+)/H(+) (TC 2.A.34) antiporter family.

It is found in the cell inner membrane. It carries out the reaction 2 Na(+)(in) + 3 H(+)(out) = 2 Na(+)(out) + 3 H(+)(in). Na(+)/H(+) antiporter that extrudes sodium in exchange for external protons. The chain is Na(+)/H(+) antiporter NhaB from Pectobacterium carotovorum subsp. carotovorum (strain PC1).